A 706-amino-acid polypeptide reads, in one-letter code: Termination factor NPH-I homolog (706 aa).

The Helicase ATP-binding domain occupies 62–227 (IGQGENTRGL…VPCFNMLSGR (166 aa)). Residue 75–82 (HQMGMGKT) coordinates ATP. A DEAH box motif is present at residues 168 to 171 (DEAH). Residues 417–599 (QCLQPLKVLE…HLNSAFRDLL (183 aa)) enclose the Helicase C-terminal domain.

It belongs to the DEAD box helicase family. DEAH subfamily. In terms of assembly, part of the viral DNA-directed RNA polymerase that consists of 8 polII-like subunits (RPB1, RPB2, RPB3, RPB5, RPB6, RPB7, RPB9, RPB10), a capping enzyme and a termination factor.

Its subcellular location is the virion. Putative DNA-dependent ATPase required for providing the needed energy to achieve the termination of early transcripts. The protein is Termination factor NPH-I homolog of Ornithodoros (relapsing fever ticks).